The primary structure comprises 169 residues: Steroid receptor-associated and regulated protein (169 aa).

In terms of assembly, interacts with 14-3-3 proteins. Expressed in breast tumors with a higher expression level in estrogen receptor-positive cancers.

In terms of biological role, may regulate the transcriptional function of androgen and estrogen receptors. The sequence is that of Steroid receptor-associated and regulated protein from Homo sapiens (Human).